The sequence spans 204 residues: 3-isopropylmalate dehydratase small subunit (204 aa).

Belongs to the LeuD family. LeuD type 1 subfamily. As to quaternary structure, heterodimer of LeuC and LeuD.

The enzyme catalyses (2R,3S)-3-isopropylmalate = (2S)-2-isopropylmalate. It functions in the pathway amino-acid biosynthesis; L-leucine biosynthesis; L-leucine from 3-methyl-2-oxobutanoate: step 2/4. Functionally, catalyzes the isomerization between 2-isopropylmalate and 3-isopropylmalate, via the formation of 2-isopropylmaleate. This Roseiflexus castenholzii (strain DSM 13941 / HLO8) protein is 3-isopropylmalate dehydratase small subunit.